We begin with the raw amino-acid sequence, 430 residues long: Adenylosuccinate synthetase (430 aa).

GTP is bound by residues 12-18 (GDEGKGK) and 40-42 (GHT). Aspartate 13 functions as the Proton acceptor in the catalytic mechanism. Mg(2+)-binding residues include aspartate 13 and glycine 40. IMP-binding positions include 13 to 16 (DEGK), 38 to 41 (NAGH), threonine 130, arginine 144, glutamine 224, and threonine 239. The active-site Proton donor is histidine 41. Positions 277–297 (PFPTEQDNETGRKIGERGREF) are disordered. The span at 285–296 (ETGRKIGERGRE) shows a compositional bias: basic and acidic residues. 299-305 (TNTGRPR) is a binding site for substrate. Arginine 303 is a binding site for IMP. Residues arginine 305, 331–333 (KLD), and 413–415 (STS) each bind GTP.

This sequence belongs to the adenylosuccinate synthetase family. As to quaternary structure, homodimer. Requires Mg(2+) as cofactor.

The protein resides in the cytoplasm. It catalyses the reaction IMP + L-aspartate + GTP = N(6)-(1,2-dicarboxyethyl)-AMP + GDP + phosphate + 2 H(+). It participates in purine metabolism; AMP biosynthesis via de novo pathway; AMP from IMP: step 1/2. In terms of biological role, plays an important role in the de novo pathway of purine nucleotide biosynthesis. Catalyzes the first committed step in the biosynthesis of AMP from IMP. In Bradyrhizobium sp. (strain ORS 278), this protein is Adenylosuccinate synthetase.